Reading from the N-terminus, the 1153-residue chain is MEGKKKRPLFFLLVLLLSHKANNVLFERMKGILLLECENEYVKNENGYKLATGHHYMDNDQIERWLQGTDRSRRVKIEENVKYKYNVEELNTKYEQTKGKRINRILKESTYEAQNVADNNYIDDKANGEYKTDNKTNKGEGARNMVMLDYDISGSGHPDGIIDNVVELGTEDEGNFLENSSKGGDHPYRMNRKERMCSGVINQTFLQKNVMRRCNNKRKRGTRDWDCPTKKDVCIPDRRYQLCMKELTNLVNNTKTHSHNDITFLKLNLKEKLTYDAAVEGDLLLKKYNNVYSEDLCKDIKWSLEDFGDIIMGTDMEGIGYSQVVENNLRTVFGTGTKTQLDRKKWWNESKKYIWEATILSVKKKLNGYSAWNCKEDVQINVEPQIYRWIREWGMDYMSELPKEQRKIKEKCDRKLYYTNLRICTMSPCNDSCKLYDQWITRKKKQWDVLSTKFSSVKKGQIIETENITTAYDILKQELNGFNEVMFENEINKRDNVYIDICLCAADEPNKNTQEHLKKLKSAPKLETQRSHSTIQPMSSSGAEKVQGDLAHGNINDAAYKSTTDEAAKGDGQNGNQTVAESNIKGTDNIENEAAKNVDTYKFVTERSADTRGATDITETGEEKLNTSYSGSSEITVKENIPGDGIVKDVSAAVENSENPLETKHKIFEPSKDNSDNSENSGSMEFKATSSNPITEAVESSSAEGQVQEDSAHRSVNTGRDNSTISAATSDDGLSSGDKRVESLTSIENADDGGDPVQGSLWNLLNDPSVGAGGGKSHIKTEENEGSQAEIDGKNVDIAEQRTATITEVQPERPDLSDTDNGNVPRSGNKQNEGATALSGAESLESNESVHKTIDNTTHGLENKNGGNEKDFQKHDFMNNDMLNDQTSSDQTSSDQTSSNQTSSDQTSSNQTSSDQTSSDQISSDQTSSDQTSSNQTSSDQTIDTEEHHRDNVRNPEIKSSEDMSKGDFMRNSNSNELYSHNNLNNRKLNIDQYEHRDVKATREKIILMSEVNKCNNRASLKYCNTIEDRMLSSTCSRERSKNLCCSISDFCLNYFELYPYEFYNCMKKEFEDSSYECFTKGSSTGIGIVYFATGGAFLIILLLFVSKNVASNDYEEEATFDEFVEYSDDIHRTPLMPNHIEHMQQFTPLDYS.

Residues 1-21 form the signal peptide; it reads MEGKKKRPLFFLLVLLLSHKA. Residues 22–1085 lie on the Extracellular side of the membrane; that stretch reads NNVLFERMKG…YECFTKGSST (1064 aa). N-linked (GlcNAc...) asparagine glycosylation is found at asparagine 134, asparagine 179, and asparagine 202. 2 disulfides stabilise this stretch: cysteine 214–cysteine 243 and cysteine 227–cysteine 234. N-linked (GlcNAc...) asparagine glycosylation is found at asparagine 252 and asparagine 348. 4 disulfides stabilise this stretch: cysteine 297/cysteine 374, cysteine 412/cysteine 429, cysteine 424/cysteine 504, and cysteine 433/cysteine 502. Asparagine 430 and asparagine 467 each carry an N-linked (GlcNAc...) asparagine glycan. Disordered regions lie at residues 520-545, 565-591, 612-631, and 655-981; these read LKSAPKLETQRSHSTIQPMSSSGAEK, DEAAKGDGQNGNQTVAESNIKGTDNIE, RGATDITETGEEKLNTSYSG, and ENSE…LYSH. 2 stretches are compositionally biased toward polar residues: residues 531 to 542 and 574 to 586; these read SHSTIQPMSSSG and NGNQTVAESNIKG. N-linked (GlcNAc...) asparagine glycans are attached at residues asparagine 576 and asparagine 626. The span at 661 to 675 shows a compositional bias: basic and acidic residues; that stretch reads LETKHKIFEPSKDNS. The segment covering 677 to 733 has biased composition (polar residues); that stretch reads NSENSGSMEFKATSSNPITEAVESSSAEGQVQEDSAHRSVNTGRDNSTISAATSDDG. A glycan (N-linked (GlcNAc...) asparagine) is linked at asparagine 722. Residues 791–800 are compositionally biased toward basic and acidic residues; sequence IDGKNVDIAE. The segment covering 819–834 has biased composition (polar residues); it reads TDNGNVPRSGNKQNEG. Asparagine 847 and asparagine 856 each carry an N-linked (GlcNAc...) asparagine glycan. The segment covering 867-878 has biased composition (basic and acidic residues); sequence GNEKDFQKHDFM. The segment covering 884–942 has biased composition (low complexity); it reads NDQTSSDQTSSDQTSSNQTSSDQTSSNQTSSDQTSSDQISSDQTSSDQTSSNQTSSDQT. Residues asparagine 900, asparagine 910, and asparagine 935 are each glycosylated (N-linked (GlcNAc...) asparagine). Over residues 945–969 the composition is skewed to basic and acidic residues; the sequence is TEEHHRDNVRNPEIKSSEDMSKGDF. Polar residues predominate over residues 971–981; that stretch reads RNSNSNELYSH. The helical transmembrane segment at 1086–1106 threads the bilayer; it reads GIGIVYFATGGAFLIILLLFV. At 1107–1153 the chain is on the cytoplasmic side; it reads SKNVASNDYEEEATFDEFVEYSDDIHRTPLMPNHIEHMQQFTPLDYS.

The protein resides in the membrane. Its function is as follows. Binds to Neu5Gc-sialylated receptors on macaque erythrocytes. The sequence is that of Duffy receptor beta form from Plasmodium knowlesi.